We begin with the raw amino-acid sequence, 287 residues long: Probable ribosomal RNA small subunit methyltransferase A (287 aa).

S-adenosyl-L-methionine is bound by residues His-29, Leu-31, Gly-56, Glu-77, Asp-102, and Asn-117.

Belongs to the class I-like SAM-binding methyltransferase superfamily. rRNA adenine N(6)-methyltransferase family. RsmA subfamily.

It is found in the cytoplasm. Its function is as follows. Specifically dimethylates two adjacent adenosines in the loop of a conserved hairpin near the 3'-end of 16S rRNA in the 30S particle. May play a critical role in biogenesis of 30S subunits. The sequence is that of Probable ribosomal RNA small subunit methyltransferase A from Methanosarcina barkeri (strain Fusaro / DSM 804).